The chain runs to 428 residues: Serine--tRNA ligase (428 aa).

Residue Thr-235–Glu-237 participates in L-serine binding. Arg-266 to Glu-268 provides a ligand contact to ATP. Glu-289 serves as a coordination point for L-serine. Residue Glu-353–Ser-356 participates in ATP binding. Ser-389 contacts L-serine.

It belongs to the class-II aminoacyl-tRNA synthetase family. Type-1 seryl-tRNA synthetase subfamily. As to quaternary structure, homodimer. The tRNA molecule binds across the dimer.

Its subcellular location is the cytoplasm. It catalyses the reaction tRNA(Ser) + L-serine + ATP = L-seryl-tRNA(Ser) + AMP + diphosphate + H(+). The catalysed reaction is tRNA(Sec) + L-serine + ATP = L-seryl-tRNA(Sec) + AMP + diphosphate + H(+). It participates in aminoacyl-tRNA biosynthesis; selenocysteinyl-tRNA(Sec) biosynthesis; L-seryl-tRNA(Sec) from L-serine and tRNA(Sec): step 1/1. In terms of biological role, catalyzes the attachment of serine to tRNA(Ser). Is also able to aminoacylate tRNA(Sec) with serine, to form the misacylated tRNA L-seryl-tRNA(Sec), which will be further converted into selenocysteinyl-tRNA(Sec). The protein is Serine--tRNA ligase of Shewanella piezotolerans (strain WP3 / JCM 13877).